The following is a 183-amino-acid chain: Ribulose bisphosphate carboxylase small subunit, chloroplastic (183 aa).

Residues 1 to 58 (MASSMLSTAAVACINRASPAQASMVAPFTGLKSTSAFPTTRKTTTDITSIASNGGRVQ) constitute a chloroplast transit peptide.

The protein belongs to the RuBisCO small chain family. As to quaternary structure, heterohexadecamer of 8 large and 8 small subunits.

The protein resides in the plastid. It localises to the chloroplast. Its function is as follows. RuBisCO catalyzes two reactions: the carboxylation of D-ribulose 1,5-bisphosphate, the primary event in carbon dioxide fixation, as well as the oxidative fragmentation of the pentose substrate. Both reactions occur simultaneously and in competition at the same active site. Although the small subunit is not catalytic it is essential for maximal activity. The sequence is that of Ribulose bisphosphate carboxylase small subunit, chloroplastic from Hevea brasiliensis (Para rubber tree).